A 267-amino-acid chain; its full sequence is tRNA-cytidine(32) 2-sulfurtransferase 1 (267 aa).

Positions 42 to 47 (SGGKDS) match the PP-loop motif motif. [4Fe-4S] cluster-binding residues include cysteine 117, cysteine 120, and cysteine 208.

Belongs to the TtcA family. As to quaternary structure, homodimer. Requires Mg(2+) as cofactor. It depends on [4Fe-4S] cluster as a cofactor.

It localises to the cytoplasm. It carries out the reaction cytidine(32) in tRNA + S-sulfanyl-L-cysteinyl-[cysteine desulfurase] + AH2 + ATP = 2-thiocytidine(32) in tRNA + L-cysteinyl-[cysteine desulfurase] + A + AMP + diphosphate + H(+). It participates in tRNA modification. In terms of biological role, catalyzes the ATP-dependent 2-thiolation of cytidine in position 32 of tRNA, to form 2-thiocytidine (s(2)C32). The sulfur atoms are provided by the cysteine/cysteine desulfurase (IscS) system. This Francisella tularensis subsp. tularensis (strain FSC 198) protein is tRNA-cytidine(32) 2-sulfurtransferase 1.